A 452-amino-acid polypeptide reads, in one-letter code: 1,3-beta-glucanosyltransferase gel1 (452 aa).

An N-terminal signal peptide occupies residues 1-19 (MKASAVTAALAVGASTVLA). Cys71 and Cys100 form a disulfide bridge. (1,3-beta-D-glucosyl)n contacts are provided by Tyr89, Asn159, Glu160, Asp201, and Arg206. Glu160 acts as the Proton donor in catalysis. 2 cysteine pairs are disulfide-bonded: Cys215–Cys345 and Cys233–Cys264. A glycan (N-linked (GlcNAc...) asparagine) is linked at Asn249. The active-site Nucleophile is Glu261. Tyr292 contacts (1,3-beta-D-glucosyl)n. The segment covering 325 to 340 (EKTSNPSGDGNYNKTG) has biased composition (polar residues). The interval 325-419 (EKTSNPSGDG…SGTSTSSKGA (95 aa)) is disordered. N-linked (GlcNAc...) asparagine glycosylation occurs at Asn337. The span at 393–419 (STATAEPGSGSATGSSSSGTSTSSKGA) shows a compositional bias: low complexity. The GPI-like-anchor amidated alanine moiety is linked to residue Ala419. Residues 420–452 (AAGLTVPSLTMAPVVVGAVTLLSTVFGAGLVLL) constitute a propeptide, removed in mature form.

It belongs to the glycosyl hydrolase 72 family. The GPI-like anchor contains a phosphoceramide lipid group. The anchor position has not been determined.

It localises to the cell membrane. Functionally, splits internally a 1,3-beta-glucan molecule and transfers the newly generated reducing end (the donor) to the non-reducing end of another 1,3-beta-glucan molecule (the acceptor) forming a 1,3-beta linkage, resulting in the elongation of 1,3-beta-glucan chains in the cell wall. Involved in cell wall morphogenesis. The chain is 1,3-beta-glucanosyltransferase gel1 (gel1) from Aspergillus fumigatus (strain CBS 144.89 / FGSC A1163 / CEA10) (Neosartorya fumigata).